A 1571-amino-acid polypeptide reads, in one-letter code: MEQPTTIQILGRDSIVADFGIWRRHVARDLLETLSSSTYILISDTNIAPLYVPEFERAFEEAAAEKSPKPRLLTYKIAPGESSKGRETKAEIEDWMLSCQPPCGRDTVLIALGGGVIGDLAGFVAATYMRGIRFVQVPTTLLAMVDSSIGGKTAIDTPNGKNLIGAIWQPEKIYLDMEFLNTLPQREFTNGMAEVIKTAAISSETTFAELEQNADAIAAALKTENTPERSRFSGIQEILKRTILASARFKADVVSKDEREGGLRNLLNFGHSIGHAIEAILAPQILHGECVAIGMIKEVELARYLGILKGAAVARLAKCLTRYGLPTSLKDARIRRLSAGKKCPVDKLIAFMAVDKKNDGPMKKVVLLSAIGRTHEQKASVVSNEELKVVLAPSIEVLPGIPKPLNVTCTPPGSKSISNRALVLAALGSGVCRIRNLLHSDDTEVMLNALEALGAATFSWEEEGEVLVVNGKGGKLEASAHELYLGNAGTASRFLTTVATLSNEKDDVSHNILTGNARMKQRPIGDLVDALKSNGVSVDYLEQQGSLPLKVPACGGFKGGAIELAAKVSSQYVSSLLMCAPYAKEKVTLKLVGGKPISETYIAMTAAMMKSFGIDVEKSTTEEYTYHIQQGQYKNPPEYIIESDASSATYPLAIAAMSGTTCTIPNIGSKSLQGDARFAVDVLRPMGCDVKQTNSSTTVTGPTNGALKPIANVDMEPMTDAFLTASVLAAVANDKSGNTTRIYGIANQRVKECNRIKAMKDELAKFGVTCREHDDGIEIDGIDSSELKVPVNGVHCYDDHRVAMSFSVLAAAAASQPTLILEKECVGKTWPAWWDALAQTFKVKLDGKELVNDNVVDIQKSTKSIASIFIIGMRGAGKTTSGYSISKALNRPFIDLDTELENVEGMPIPEIIKQKGWEGFRDAELALLKRMMAEKPTGYIFACGGGIVETKEARDLLINYHKNKGNVFLIMRNIKKVIEFLEIDKTRPAYIEDMMGVWLRREPWYQECSNLQYYSHHSERSELDAALQGFTRFLNVVMGNTDHLALLKKKDHSFFVSLTLPDLQLSADILRAATFGSDAIELRVDLLKDPSSTSGVPSVGYVAEQMSFLRSHASQPLIFTIRTKAQGGQFPDDAVDKALELYKLAIRMGSEFVDLELSFPNDLLHAVTEMKGFSKIIASHHDVNSQLSWSNGSWIQYYNKALQHGDIIKLIGVAKTFEDNMALQQFKSWAEKSYPVPIIAINMGNKGRLSRILNRFMTPVSHPALPFKAAPGQVSAKDIRQALTLMGELDAKKFALFGKPISASRSPALHNALFTQAGFPHDYGLLETDKAENVEKFIRSDDFGGASVTIPLKEQIMGLLDEISPEAKIIGAVNTIVPITVSGRPPRLIGYNTDWQGMARCLKDAGAICSNNGESALTIGSGGTARAAIYSLHSMGYSPIYLVGRTPSNLSKLASSFPAEYNIQVVQDIKSVQAAPKVAISTIPGDQELENPLPELITQIMEKGQDSSRECILLDMAYKPDVTTMARLASPAGWKIIKGLEVLVAQGIYQFEHWTGLMPIYEDARAAVMNI.

A 3-dehydroquinate synthase region spans residues 1 to 384 (MEQPTTIQIL…HEQKASVVSN (384 aa)). NAD(+) contacts are provided by residues 44–46 (DTN), 81–84 (ESSK), 114–116 (GGV), and D119. R130 contacts 7-phospho-2-dehydro-3-deoxy-D-arabino-heptonate. NAD(+) is bound at residue 139–140 (TT). The 7-phospho-2-dehydro-3-deoxy-D-arabino-heptonate site is built by D146 and K152. K161 contacts NAD(+). 7-phospho-2-dehydro-3-deoxy-D-arabino-heptonate is bound at residue N162. NAD(+) is bound by residues 179-182 (FLNT) and N190. Residue E194 participates in Zn(2+) binding. 7-phospho-2-dehydro-3-deoxy-D-arabino-heptonate-binding positions include 194 to 197 (EVIK) and K250. The Proton acceptor; for 3-dehydroquinate synthase activity role is filled by E260. Residues 264-268 (RNLLN) and H271 contribute to the 7-phospho-2-dehydro-3-deoxy-D-arabino-heptonate site. Residue H271 coordinates Zn(2+). H275 serves as the catalytic Proton acceptor; for 3-dehydroquinate synthase activity. 7-phospho-2-dehydro-3-deoxy-D-arabino-heptonate-binding residues include H287 and K356. Position 287 (H287) interacts with Zn(2+). Residues 397–843 (VLPGIPKPLN…WDALAQTFKV (447 aa)) are EPSP synthase. Catalysis depends on C825, which acts as the For EPSP synthase activity. Positions 866–1057 (ASIFIIGMRG…KKKDHSFFVS (192 aa)) are shikimate kinase. 872–879 (GMRGAGKT) contributes to the ATP binding site. Residues 1058–1278 (LTLPDLQLSA…AAPGQVSAKD (221 aa)) form a 3-dehydroquinase region. H1181 (proton acceptor; for 3-dehydroquinate dehydratase activity) is an active-site residue. Catalysis depends on K1209, which acts as the Schiff-base intermediate with substrate; for 3-dehydroquinate dehydratase activity. The segment at 1291-1571 (AKKFALFGKP…EDARAAVMNI (281 aa)) is shikimate dehydrogenase.

It in the N-terminal section; belongs to the sugar phosphate cyclases superfamily. Dehydroquinate synthase family. In the 2nd section; belongs to the EPSP synthase family. The protein in the 3rd section; belongs to the shikimate kinase family. This sequence in the 4th section; belongs to the type-I 3-dehydroquinase family. It in the C-terminal section; belongs to the shikimate dehydrogenase family. As to quaternary structure, homodimer. Zn(2+) is required as a cofactor.

It is found in the cytoplasm. It carries out the reaction 7-phospho-2-dehydro-3-deoxy-D-arabino-heptonate = 3-dehydroquinate + phosphate. The enzyme catalyses 3-dehydroquinate = 3-dehydroshikimate + H2O. The catalysed reaction is shikimate + NADP(+) = 3-dehydroshikimate + NADPH + H(+). It catalyses the reaction shikimate + ATP = 3-phosphoshikimate + ADP + H(+). It carries out the reaction 3-phosphoshikimate + phosphoenolpyruvate = 5-O-(1-carboxyvinyl)-3-phosphoshikimate + phosphate. Its pathway is metabolic intermediate biosynthesis; chorismate biosynthesis; chorismate from D-erythrose 4-phosphate and phosphoenolpyruvate: step 2/7. It functions in the pathway metabolic intermediate biosynthesis; chorismate biosynthesis; chorismate from D-erythrose 4-phosphate and phosphoenolpyruvate: step 3/7. The protein operates within metabolic intermediate biosynthesis; chorismate biosynthesis; chorismate from D-erythrose 4-phosphate and phosphoenolpyruvate: step 4/7. It participates in metabolic intermediate biosynthesis; chorismate biosynthesis; chorismate from D-erythrose 4-phosphate and phosphoenolpyruvate: step 5/7. Its pathway is metabolic intermediate biosynthesis; chorismate biosynthesis; chorismate from D-erythrose 4-phosphate and phosphoenolpyruvate: step 6/7. The AROM polypeptide catalyzes 5 consecutive enzymatic reactions in prechorismate polyaromatic amino acid biosynthesis. This is Pentafunctional AROM polypeptide from Arthroderma otae (strain ATCC MYA-4605 / CBS 113480) (Microsporum canis).